A 186-amino-acid chain; its full sequence is Protein GrpE (186 aa).

A compositionally biased stretch (basic and acidic residues) spans 1–17 (MKDEHNQEHDLSQKELE). The segment at 1-32 (MKDEHNQEHDLSQKELESCENSCTCEGKKQEA) is disordered.

The protein belongs to the GrpE family. In terms of assembly, homodimer.

Its subcellular location is the cytoplasm. Its function is as follows. Participates actively in the response to hyperosmotic and heat shock by preventing the aggregation of stress-denatured proteins, in association with DnaK and GrpE. It is the nucleotide exchange factor for DnaK and may function as a thermosensor. Unfolded proteins bind initially to DnaJ; upon interaction with the DnaJ-bound protein, DnaK hydrolyzes its bound ATP, resulting in the formation of a stable complex. GrpE releases ADP from DnaK; ATP binding to DnaK triggers the release of the substrate protein, thus completing the reaction cycle. Several rounds of ATP-dependent interactions between DnaJ, DnaK and GrpE are required for fully efficient folding. The chain is Protein GrpE from Helicobacter acinonychis (strain Sheeba).